A 519-amino-acid polypeptide reads, in one-letter code: Mannosyl-oligosaccharide alpha-1,2-mannosidase (519 aa).

Residues 1–22 (MKGSPVLAVCAAALTLIPSVVA) form the signal peptide. N-linked (GlcNAc...) asparagine glycosylation is present at Asn-187. Cys-337 and Cys-366 are disulfide-bonded. Glu-380 (proton donor) is an active-site residue. A glycan (N-linked (GlcNAc...) asparagine) is linked at Asn-443. Thr-507 is a binding site for Ca(2+).

This sequence belongs to the glycosyl hydrolase 47 family. As to quaternary structure, monomer. It depends on Ca(2+) as a cofactor. Requires Mg(2+) as cofactor.

The protein localises to the secreted. It catalyses the reaction N(4)-(alpha-D-Man-(1-&gt;2)-alpha-D-Man-(1-&gt;2)-alpha-D-Man-(1-&gt;3)-[alpha-D-Man-(1-&gt;2)-alpha-D-Man-(1-&gt;3)-[alpha-D-Man-(1-&gt;2)-alpha-D-Man-(1-&gt;6)]-alpha-D-Man-(1-&gt;6)]-beta-D-Man-(1-&gt;4)-beta-D-GlcNAc-(1-&gt;4)-beta-D-GlcNAc)-L-asparaginyl-[protein] (N-glucan mannose isomer 9A1,2,3B1,2,3) + 4 H2O = N(4)-(alpha-D-Man-(1-&gt;3)-[alpha-D-Man-(1-&gt;3)-[alpha-D-Man-(1-&gt;6)]-alpha-D-Man-(1-&gt;6)]-beta-D-Man-(1-&gt;4)-beta-D-GlcNAc-(1-&gt;4)-beta-D-GlcNAc)-L-asparaginyl-[protein] (N-glucan mannose isomer 5A1,2) + 4 beta-D-mannose. The enzyme catalyses N(4)-(alpha-D-Man-(1-&gt;2)-alpha-D-Man-(1-&gt;2)-alpha-D-Man-(1-&gt;3)-[alpha-D-Man-(1-&gt;3)-[alpha-D-Man-(1-&gt;2)-alpha-D-Man-(1-&gt;6)]-alpha-D-Man-(1-&gt;6)]-beta-D-Man-(1-&gt;4)-beta-D-GlcNAc-(1-&gt;4)-beta-D-GlcNAc)-L-asparaginyl-[protein] (N-glucan mannose isomer 8A1,2,3B1,3) + 3 H2O = N(4)-(alpha-D-Man-(1-&gt;3)-[alpha-D-Man-(1-&gt;3)-[alpha-D-Man-(1-&gt;6)]-alpha-D-Man-(1-&gt;6)]-beta-D-Man-(1-&gt;4)-beta-D-GlcNAc-(1-&gt;4)-beta-D-GlcNAc)-L-asparaginyl-[protein] (N-glucan mannose isomer 5A1,2) + 3 beta-D-mannose. The protein operates within protein modification; protein glycosylation. In terms of biological role, alpha-mannosidase involved in the maturation of Asn-linked oligosaccharides. Progressively trims alpha-1,2-linked mannose residues from Man(9)GlcNAc(2) to produce Man(5)GlcNAc(2). The protein is Mannosyl-oligosaccharide alpha-1,2-mannosidase of Coccidioides posadasii (strain RMSCC 757 / Silveira) (Valley fever fungus).